A 457-amino-acid polypeptide reads, in one-letter code: Bifunctional protein GlmU (457 aa).

Positions 1–232 (MAKVAAIVLA…PMEVMGVNDR (232 aa)) are pyrophosphorylase. UDP-N-acetyl-alpha-D-glucosamine contacts are provided by residues 9–12 (LAAG), Lys-23, Gln-75, and 80–81 (GT). Asp-105 contacts Mg(2+). Positions 142, 157, 172, and 230 each coordinate UDP-N-acetyl-alpha-D-glucosamine. Asn-230 lines the Mg(2+) pocket. Positions 233 to 253 (VQLAEAGRIIRVRINKALMVA) are linker. Residues 254 to 457 (GTTIIDPETT…NKEGWKLKNK (204 aa)) form an N-acetyltransferase region. Arg-336 and Lys-354 together coordinate UDP-N-acetyl-alpha-D-glucosamine. The Proton acceptor role is filled by His-366. Residues Tyr-369 and Asn-380 each contribute to the UDP-N-acetyl-alpha-D-glucosamine site. Residues 389 to 390 (NY), Ser-408, Ala-426, and Arg-443 each bind acetyl-CoA.

The protein in the N-terminal section; belongs to the N-acetylglucosamine-1-phosphate uridyltransferase family. It in the C-terminal section; belongs to the transferase hexapeptide repeat family. As to quaternary structure, homotrimer. Mg(2+) is required as a cofactor.

Its subcellular location is the cytoplasm. It carries out the reaction alpha-D-glucosamine 1-phosphate + acetyl-CoA = N-acetyl-alpha-D-glucosamine 1-phosphate + CoA + H(+). The catalysed reaction is N-acetyl-alpha-D-glucosamine 1-phosphate + UTP + H(+) = UDP-N-acetyl-alpha-D-glucosamine + diphosphate. It functions in the pathway nucleotide-sugar biosynthesis; UDP-N-acetyl-alpha-D-glucosamine biosynthesis; N-acetyl-alpha-D-glucosamine 1-phosphate from alpha-D-glucosamine 6-phosphate (route II): step 2/2. The protein operates within nucleotide-sugar biosynthesis; UDP-N-acetyl-alpha-D-glucosamine biosynthesis; UDP-N-acetyl-alpha-D-glucosamine from N-acetyl-alpha-D-glucosamine 1-phosphate: step 1/1. It participates in bacterial outer membrane biogenesis; LPS lipid A biosynthesis. Its function is as follows. Catalyzes the last two sequential reactions in the de novo biosynthetic pathway for UDP-N-acetylglucosamine (UDP-GlcNAc). The C-terminal domain catalyzes the transfer of acetyl group from acetyl coenzyme A to glucosamine-1-phosphate (GlcN-1-P) to produce N-acetylglucosamine-1-phosphate (GlcNAc-1-P), which is converted into UDP-GlcNAc by the transfer of uridine 5-monophosphate (from uridine 5-triphosphate), a reaction catalyzed by the N-terminal domain. This is Bifunctional protein GlmU from Geotalea daltonii (strain DSM 22248 / JCM 15807 / FRC-32) (Geobacter daltonii).